The sequence spans 382 residues: Cysteine desulfurase IscS 1 (382 aa).

Asn149 contributes to the pyridoxal 5'-phosphate binding site. Residue Cys321 is the Cysteine persulfide intermediate of the active site. Cys321 contributes to the [2Fe-2S] cluster binding site.

This sequence belongs to the class-V pyridoxal-phosphate-dependent aminotransferase family. NifS/IscS subfamily. As to quaternary structure, homodimer. Forms a heterotetramer with IscU, interacts with other sulfur acceptors. It depends on pyridoxal 5'-phosphate as a cofactor.

Its subcellular location is the cytoplasm. It catalyses the reaction (sulfur carrier)-H + L-cysteine = (sulfur carrier)-SH + L-alanine. It participates in cofactor biosynthesis; iron-sulfur cluster biosynthesis. In terms of biological role, master enzyme that delivers sulfur to a number of partners involved in Fe-S cluster assembly, tRNA modification or cofactor biosynthesis. Catalyzes the removal of elemental sulfur atoms from cysteine to produce alanine. Functions as a sulfur delivery protein for Fe-S cluster synthesis onto IscU, an Fe-S scaffold assembly protein, as well as other S acceptor proteins. This chain is Cysteine desulfurase IscS 1, found in Archaeoglobus fulgidus (strain ATCC 49558 / DSM 4304 / JCM 9628 / NBRC 100126 / VC-16).